Here is a 437-residue protein sequence, read N- to C-terminus: Beta-1,3-galactosyl-O-glycosyl-glycoprotein beta-1,6-N-acetylglucosaminyltransferase 3 (437 aa).

Topologically, residues 1–6 (MVSWRR) are cytoplasmic. A helical; Signal-anchor for type II membrane protein transmembrane segment spans residues 7–27 (FCWHYHGWTLGCYMLLAIIAL). The Lumenal portion of the chain corresponds to 28–437 (KLSLRLKCDF…RHKAIYGTEL (410 aa)). 4 disulfides stabilise this stretch: Cys-70-Cys-227, Cys-161-Cys-381, Cys-182-Cys-209, and Cys-390-Cys-422. Asn-288 is a glycosylation site (N-linked (GlcNAc...) asparagine).

This sequence belongs to the glycosyltransferase 14 family. N-glycosylated.

The protein resides in the golgi apparatus membrane. It catalyses the reaction a 3-O-[beta-D-galactosyl-(1-&gt;3)-N-acetyl-alpha-D-galactosaminyl]-L-seryl-[protein] + UDP-N-acetyl-alpha-D-glucosamine = 3-O-{beta-D-galactosyl-(1-&gt;3)-[N-acetyl-beta-D-glucosaminyl-(1-&gt;6)]-N-acetyl-alpha-D-galactosaminyl}-L-seryl-[protein] + UDP + H(+). The catalysed reaction is a 3-O-[beta-D-galactosyl-(1-&gt;3)-N-acetyl-alpha-D-galactosaminyl]-L-threonyl-[protein] + UDP-N-acetyl-alpha-D-glucosamine = a 3-O-{beta-D-galactosyl-(1-&gt;3)-[N-acetyl-beta-D-glucosaminyl-(1-&gt;6)]-N-acetyl-alpha-D-galactosaminyl}-L-threonyl-[protein] + UDP + H(+). It carries out the reaction a beta-D-Gal-(1-&gt;4)-beta-D-GlcNAc-(1-&gt;3)-beta-D-Gal-(1-&gt;4)-beta-D-GlcNAc derivative + UDP-N-acetyl-alpha-D-glucosamine = a beta-D-Gal-(1-&gt;4)-beta-D-GlcNAc-(1-&gt;3)-[beta-D-GlcNAc-(1-&gt;6)]-beta-D-Gal-(1-&gt;4)-N-acetyl-beta-D-glucosaminyl derivative + UDP + H(+). The enzyme catalyses 3-O-[N-acetyl-beta-D-glucosaminyl-(1-&gt;3)-N-acetyl-alpha-D-galactosaminyl]-L-seryl-[protein] + UDP-N-acetyl-alpha-D-glucosamine = 3-O-[N-acetyl-beta-D-glucosaminyl-(1-&gt;3)-[N-acetyl-beta-D-glucosaminyl-(1-&gt;6)]-N-acetyl-alpha-D-galactosaminyl]-L-seryl-[protein] + UDP + H(+). It catalyses the reaction a 3-O-[N-acetyl-beta-D-glucosaminyl-(1-&gt;3)-N-acetyl-alpha-D-galactosaminyl]-L-threonyl-[protein] + UDP-N-acetyl-alpha-D-glucosamine = 3-O-[N-acetyl-beta-D-glucosaminyl-(1-&gt;3)-[N-acetyl-beta-D-glucosaminyl-(1-&gt;6)]-N-acetyl-alpha-D-galactosaminyl]-L-threonyl-[protein] + UDP + H(+). Its pathway is protein modification; protein glycosylation. Its function is as follows. Glycosyltransferase that can synthesize all known mucin beta 6 N-acetylglucosaminides. Mediates core 2 and core 4 O-glycan branching, 2 important steps in mucin-type biosynthesis. Also has I-branching enzyme activity by converting linear into branched poly-N-acetyllactosaminoglycans, leading to introduce the blood group I antigen during embryonic development. This is Beta-1,3-galactosyl-O-glycosyl-glycoprotein beta-1,6-N-acetylglucosaminyltransferase 3 (Gcnt3) from Rattus norvegicus (Rat).